A 1038-amino-acid polypeptide reads, in one-letter code: Kinesin-like protein KIN-5B (1038 aa).

The segment at M1–M63 is disordered. The span at R24 to W34 shows a compositional bias: basic and acidic residues. Residues G49–S61 show a composition bias toward gly residues. One can recognise a Kinesin motor domain in the interval N69–I410. An ATP-binding site is contributed by G154–T161. The stretch at Q453 to N502 forms a coiled coil. Residues D1013–K1038 are disordered.

It belongs to the TRAFAC class myosin-kinesin ATPase superfamily. Kinesin family. KIN-5/BimC subfamily.

It is found in the cytoplasm. The protein localises to the cytoskeleton. The protein resides in the spindle. In terms of biological role, responsible for microtubule translocation. May be important for the organization of phragmoplast-specific arrays of microtubules. Plays an essential role in stabilizing the mitotic spindle. Required during mitotic cytokinesis. In Oryza sativa subsp. japonica (Rice), this protein is Kinesin-like protein KIN-5B.